The sequence spans 291 residues: U7 snRNA-associated Sm-like protein LSm11 (291 aa).

Residues A55–E84 form a disordered region. A Sm domain is found at S124–L199. The segment at G155–I289 is SM. Residues E203–Y266 form a disordered region. The segment covering N251 to K261 has biased composition (basic residues).

This sequence belongs to the snRNP Sm proteins family. Component of the heptameric ring U7 snRNP complex.

Its subcellular location is the nucleus. Functionally, component of the U7 snRNP complex that is involved in the histone 3'-end pre-mRNA processing. Increases U7 snRNA levels but not histone 3'-end pre-mRNA processing activity, when overexpressed. Binds specifically to the Sm-binding site of U7 snRNA. This chain is U7 snRNA-associated Sm-like protein LSm11, found in Xenopus laevis (African clawed frog).